The primary structure comprises 104 residues: uncharacterized protein (104 aa).

The disordered stretch occupies residues 51–70 (NPGRSLDNNKDVSDKGRSEF). The segment covering 57–70 (DNNKDVSDKGRSEF) has biased composition (basic and acidic residues).

It belongs to the protein-tyrosine phosphatase family.

This is an uncharacterized protein from Xanthomonas campestris pv. campestris (strain ATCC 33913 / DSM 3586 / NCPPB 528 / LMG 568 / P 25).